Consider the following 263-residue polypeptide: Probable elongation factor 1-beta/1-delta 2 (263 aa).

The residue at position 2 (S2) is an N-acetylserine. Positions 112–153 (QGQTSSVAAPAAAPAAAKEEAAGDDDFDLFGSEDEEEDEEKK) are disordered. The segment covering 133–150 (AGDDDFDLFGSEDEEEDE) has biased composition (acidic residues).

Belongs to the EF-1-beta/EF-1-delta family. As to quaternary structure, EF-1 is composed of 4 subunits: alpha, beta, delta, and gamma.

Its function is as follows. EF-1-beta and EF-1-delta stimulate the exchange of GDP bound to EF-1-alpha to GTP. This is Probable elongation factor 1-beta/1-delta 2 from Caenorhabditis elegans.